A 390-amino-acid chain; its full sequence is 5-hydroxytryptamine receptor 1B (390 aa).

Over 1–46 (MEEPGAQCAPPLAAGSQIAVPQANLSAAHSHNCSAEGYIYQDSIAL) the chain is Extracellular. 2 N-linked (GlcNAc...) asparagine glycosylation sites follow: asparagine 24 and asparagine 32. A helical transmembrane segment spans residues 47–72 (PWKVLLVLLLALFTLATTLSNAFVVA). At 73–86 (TVYRTRKLHTPANY) the chain is on the cytoplasmic side. Residues 87-111 (LIASLAVTDLLVSILVMPISTMYTV) traverse the membrane as a helical segment. At 112-119 (TGRWTLGQ) the chain is on the extracellular side. Residues 120-145 (VVCDLWLSSDITCCTASIMHLCVIAL) form a helical membrane-spanning segment. Cysteine 122 and cysteine 199 are joined by a disulfide. The ergotamine site is built by aspartate 129 and threonine 134. The DRY motif; important for ligand-induced conformation changes and signaling motif lies at 146-148 (DRY). Over 146-165 (DRYWAITDAVEYSAKRTPKR) the chain is Cytoplasmic. A helical transmembrane segment spans residues 166–184 (AAIMIRLVWVFSICISLPP). The Extracellular portion of the chain corresponds to 185–205 (FFWRQAKAEEEVSECLVNTDH). Valine 201 is an ergotamine binding site. The helical transmembrane segment at 206–229 (VLYTVYSTVGAFYLPTLLLIALYG) threads the bilayer. Topologically, residues 230 to 315 (RIYVEARSRI…AARERKATKT (86 aa)) are cytoplasmic. Over residues 260-272 (SPGSTTSVTSINS) the composition is skewed to polar residues. A disordered region spans residues 260-282 (SPGSTTSVTSINSRAPDVPSESG). Residues 316 to 337 (LGIILGVFIVCWLPFFIISLVM) form a helical membrane-spanning segment. At 338–347 (PICKDACWFH) the chain is on the extracellular side. Residues 348-370 (QAIFDFFTWLGYVNSLINPIIYT) traverse the membrane as a helical segment. Positions 365 to 369 (NPIIY) match the NPxxY motif; important for ligand-induced conformation changes and signaling motif. The Cytoplasmic portion of the chain corresponds to 371-390 (MSNEDFKQAFHKLIRFKCTS). The S-palmitoyl cysteine moiety is linked to residue cysteine 388.

The protein belongs to the G-protein coupled receptor 1 family. In terms of assembly, homodimer. Heterodimer with HTR1D. Post-translationally, phosphorylated. Desensitization of the receptor may be mediated by its phosphorylation. In terms of processing, palmitoylated.

Its subcellular location is the cell membrane. Functionally, G-protein coupled receptor for 5-hydroxytryptamine (serotonin). Also functions as a receptor for ergot alkaloid derivatives, various anxiolytic and antidepressant drugs and other psychoactive substances, such as lysergic acid diethylamide (LSD). Ligand binding causes a conformation change that triggers signaling via guanine nucleotide-binding proteins (G proteins) and modulates the activity of downstream effectors, such as adenylate cyclase. HTR1B is coupled to G(i)/G(o) G alpha proteins and mediates inhibitory neurotransmission by inhibiting adenylate cyclase activity. Arrestin family members inhibit signaling via G proteins and mediate activation of alternative signaling pathways. Regulates the release of 5-hydroxytryptamine, dopamine and acetylcholine in the brain, and thereby affects neural activity, nociceptive processing, pain perception, mood and behavior. Besides, plays a role in vasoconstriction of cerebral arteries. In Oryctolagus cuniculus (Rabbit), this protein is 5-hydroxytryptamine receptor 1B (HTR1B).